The sequence spans 258 residues: Tryptophan synthase alpha chain (258 aa).

Residues glutamate 47 and aspartate 58 each act as proton acceptor in the active site.

The protein belongs to the TrpA family. Tetramer of two alpha and two beta chains.

It catalyses the reaction (1S,2R)-1-C-(indol-3-yl)glycerol 3-phosphate + L-serine = D-glyceraldehyde 3-phosphate + L-tryptophan + H2O. It functions in the pathway amino-acid biosynthesis; L-tryptophan biosynthesis; L-tryptophan from chorismate: step 5/5. In terms of biological role, the alpha subunit is responsible for the aldol cleavage of indoleglycerol phosphate to indole and glyceraldehyde 3-phosphate. The sequence is that of Tryptophan synthase alpha chain from Bacillus thuringiensis subsp. konkukian (strain 97-27).